The sequence spans 407 residues: Imidazolonepropionase (407 aa).

Positions 74 and 76 each coordinate Fe(3+). Zn(2+) is bound by residues histidine 74 and histidine 76. 4-imidazolone-5-propanoate contacts are provided by arginine 83, tyrosine 146, and histidine 179. N-formimidoyl-L-glutamate is bound at residue tyrosine 146. Histidine 244 provides a ligand contact to Fe(3+). Residue histidine 244 participates in Zn(2+) binding. Glutamine 247 provides a ligand contact to 4-imidazolone-5-propanoate. Aspartate 319 contributes to the Fe(3+) binding site. Residue aspartate 319 coordinates Zn(2+). Residues asparagine 321 and glycine 323 each coordinate N-formimidoyl-L-glutamate. Threonine 324 is a binding site for 4-imidazolone-5-propanoate.

Belongs to the metallo-dependent hydrolases superfamily. HutI family. Zn(2+) serves as cofactor. Requires Fe(3+) as cofactor.

The protein resides in the cytoplasm. It carries out the reaction 4-imidazolone-5-propanoate + H2O = N-formimidoyl-L-glutamate. It functions in the pathway amino-acid degradation; L-histidine degradation into L-glutamate; N-formimidoyl-L-glutamate from L-histidine: step 3/3. Its function is as follows. Catalyzes the hydrolytic cleavage of the carbon-nitrogen bond in imidazolone-5-propanoate to yield N-formimidoyl-L-glutamate. It is the third step in the universal histidine degradation pathway. This Salmonella agona (strain SL483) protein is Imidazolonepropionase.